Reading from the N-terminus, the 298-residue chain is Nucleotide-binding protein GTNG_3015 (298 aa).

17 to 24 provides a ligand contact to ATP; sequence GMSGAGKT. 68-71 provides a ligand contact to GTP; sequence DLRS.

It belongs to the RapZ-like family.

Displays ATPase and GTPase activities. The sequence is that of Nucleotide-binding protein GTNG_3015 from Geobacillus thermodenitrificans (strain NG80-2).